The chain runs to 464 residues: Alpha-2A adrenergic receptor (464 aa).

Over 1 to 47 (MFRQEQRWPRQLWPMGSLQPDSGNASWNGTEGPGGGTRATPYSLQVT) the chain is Extracellular. Residues 13-34 (WPMGSLQPDSGNASWNGTEGPG) form a disordered region. Residues 19–29 (QPDSGNASWNG) show a composition bias toward polar residues. 2 N-linked (GlcNAc...) asparagine glycosylation sites follow: asparagine 24 and asparagine 28. Residues 48–73 (VTLVCLVGLLILLTVFGNVLVIIAVF) traverse the membrane as a helical segment. The Cytoplasmic portion of the chain corresponds to 74–84 (TSRALKAPQNL). A helical membrane pass occupies residues 85–110 (FLVSLASADILVATLVIPFSLANEVM). At 111 to 120 (GYWYFGKAWC) the chain is on the extracellular side. Cysteine 120 and cysteine 201 are oxidised to a cystine. A helical transmembrane segment spans residues 121-143 (EIYLALDVLFCTSSIVHLCAISL). Residues 144–163 (DRYWSITQAIEYNLKRTPRR) are Cytoplasmic-facing. Residues 164–187 (IKAIIVTVWVISAVISFPPLISFE) form a helical membrane-spanning segment. The Extracellular portion of the chain corresponds to 188-206 (KAGGGGQQPAEPRCEINDQ). The helical transmembrane segment at 207-231 (KWYVISSSIGSFFAPCLIMILVYVR) threads the bilayer. Topologically, residues 232–388 (IYQIAKRRTR…RQNREKRFTF (157 aa)) are cytoplasmic. The interval 240 to 378 (TRVPPSRRGP…GGAKASRWRG (139 aa)) is disordered. Residues 251–268 (AHAAAPPGGAERRPNGLG) show a composition bias toward low complexity. Residues 312-329 (SSEHAERPPGARRPERGL) show a composition bias toward basic and acidic residues. Residue serine 345 is modified to Phosphoserine. Residues 354 to 363 (AGSGTSGSGP) are compositionally biased toward gly residues. Omega-N-methylarginine is present on arginine 367. The chain crosses the membrane as a helical span at residues 389–413 (VLAVVIGVFVVCWFPFFFTYTLTAV). The Extracellular portion of the chain corresponds to 414-423 (GCSVPRTLFK). The helical transmembrane segment at 424–444 (FFFWFGYCNSSLNPVIYTIFN) threads the bilayer. At 445–464 (HDFRRAFKKILCRGDRKRIV) the chain is on the cytoplasmic side. Residue cysteine 456 is the site of S-palmitoyl cysteine attachment.

It belongs to the G-protein coupled receptor 1 family. Adrenergic receptor subfamily. ADRA2A sub-subfamily. In terms of assembly, component of the ADA2A-containing complex (ATAC), composed of KAT14, KAT2A, TADA2L, TADA3L, ZZ3, MBIP, WDR5, YEATS2, CCDC101 and DR1.

It is found in the cell membrane. Functionally, alpha-2 adrenergic receptors mediate the catecholamine-induced inhibition of adenylate cyclase through the action of G proteins. Component of the ATAC complex, a complex with histone acetyltransferase activity on histones H3 and H4. The sequence is that of Alpha-2A adrenergic receptor from Cavia porcellus (Guinea pig).